The following is a 444-amino-acid chain: tRNA modification GTPase MnmE (444 aa).

R22, E79, and R118 together coordinate (6S)-5-formyl-5,6,7,8-tetrahydrofolate. Residues 214 to 368 enclose the TrmE-type G domain; it reads GMQVVLAGPP…LRDHLKSVMG (155 aa). N224 serves as a coordination point for K(+). Residues 224–229, 243–249, and 268–271 each bind GTP; these read NAGKSS, TEVPGTT, and DTAG. S228 lines the Mg(2+) pocket. Positions 243, 245, and 248 each coordinate K(+). Mg(2+) is bound at residue T249. K444 serves as a coordination point for (6S)-5-formyl-5,6,7,8-tetrahydrofolate.

It belongs to the TRAFAC class TrmE-Era-EngA-EngB-Septin-like GTPase superfamily. TrmE GTPase family. As to quaternary structure, homodimer. Heterotetramer of two MnmE and two MnmG subunits. It depends on K(+) as a cofactor.

The protein resides in the cytoplasm. Functionally, exhibits a very high intrinsic GTPase hydrolysis rate. Involved in the addition of a carboxymethylaminomethyl (cmnm) group at the wobble position (U34) of certain tRNAs, forming tRNA-cmnm(5)s(2)U34. The sequence is that of tRNA modification GTPase MnmE from Alkalilimnicola ehrlichii (strain ATCC BAA-1101 / DSM 17681 / MLHE-1).